We begin with the raw amino-acid sequence, 136 residues long: Large ribosomal subunit protein uL22 (136 aa).

This sequence belongs to the universal ribosomal protein uL22 family. Part of the 50S ribosomal subunit.

In terms of biological role, this protein binds specifically to 23S rRNA; its binding is stimulated by other ribosomal proteins, e.g. L4, L17, and L20. It is important during the early stages of 50S assembly. It makes multiple contacts with different domains of the 23S rRNA in the assembled 50S subunit and ribosome. Functionally, the globular domain of the protein is located near the polypeptide exit tunnel on the outside of the subunit, while an extended beta-hairpin is found that lines the wall of the exit tunnel in the center of the 70S ribosome. The chain is Large ribosomal subunit protein uL22 from Bacteroides fragilis (strain YCH46).